The chain runs to 246 residues: Small ribosomal subunit protein uS2 (246 aa).

It belongs to the universal ribosomal protein uS2 family.

This chain is Small ribosomal subunit protein uS2, found in Burkholderia thailandensis (strain ATCC 700388 / DSM 13276 / CCUG 48851 / CIP 106301 / E264).